A 432-amino-acid polypeptide reads, in one-letter code: Glyceraldehyde-3-phosphate dehydrogenase, testis-specific (432 aa).

Residues 1-97 (MSRRDVVLTN…PPPPPPPKPA (97 aa)) are testis-specific N-terminal extension. A disordered region spans residues 40–101 (PPPPKVEEPP…PPPKPAKELT (62 aa)). The span at 44 to 55 (KVEEPPPPKEEP) shows a compositional bias: basic and acidic residues. Pro residues-rich tracts occupy residues 56 to 67 (PPPPPPPPPPQI) and 75 to 95 (APPP…PPPK). NAD(+) is bound by residues 109–110 (RI), D130, K175, Y197, and T217. D-glyceraldehyde 3-phosphate-binding positions include 247–249 (SCT), T278, 307–308 (TG), and R330. The Nucleophile role is filled by C248. S350 carries the phosphoserine modification. Residue N412 coordinates NAD(+).

This sequence belongs to the glyceraldehyde-3-phosphate dehydrogenase family. As to quaternary structure, homotetramer. As to expression, expressed in both head and flagellum of epididymal sperm.

The protein resides in the cytoplasm. The catalysed reaction is D-glyceraldehyde 3-phosphate + phosphate + NAD(+) = (2R)-3-phospho-glyceroyl phosphate + NADH + H(+). The protein operates within carbohydrate degradation; glycolysis; pyruvate from D-glyceraldehyde 3-phosphate: step 1/5. Functionally, may play an important role in regulating the switch between different pathways for energy production during spermiogenesis and in the spermatozoon. Required for sperm motility and male fertility. In Rattus norvegicus (Rat), this protein is Glyceraldehyde-3-phosphate dehydrogenase, testis-specific (Gapdhs).